Here is a 156-residue protein sequence, read N- to C-terminus: Small ribosomal subunit protein uS7 (156 aa).

This sequence belongs to the universal ribosomal protein uS7 family. As to quaternary structure, part of the 30S ribosomal subunit. Contacts proteins S9 and S11.

One of the primary rRNA binding proteins, it binds directly to 16S rRNA where it nucleates assembly of the head domain of the 30S subunit. Is located at the subunit interface close to the decoding center, probably blocks exit of the E-site tRNA. This is Small ribosomal subunit protein uS7 from Colwellia psychrerythraea (strain 34H / ATCC BAA-681) (Vibrio psychroerythus).